The primary structure comprises 242 residues: Small ribosomal subunit protein uS2 (242 aa).

The protein belongs to the universal ribosomal protein uS2 family.

The sequence is that of Small ribosomal subunit protein uS2 from Neisseria gonorrhoeae (strain ATCC 700825 / FA 1090).